The primary structure comprises 214 residues: tRNA (guanine-N(7)-)-methyltransferase (214 aa).

The S-adenosyl-L-methionine site is built by E44, E69, D96, and D118. D118 is an active-site residue. Substrate contacts are provided by residues K122, D154, and 191–194 (TEYE).

This sequence belongs to the class I-like SAM-binding methyltransferase superfamily. TrmB family.

It catalyses the reaction guanosine(46) in tRNA + S-adenosyl-L-methionine = N(7)-methylguanosine(46) in tRNA + S-adenosyl-L-homocysteine. The protein operates within tRNA modification; N(7)-methylguanine-tRNA biosynthesis. Functionally, catalyzes the formation of N(7)-methylguanine at position 46 (m7G46) in tRNA. This chain is tRNA (guanine-N(7)-)-methyltransferase, found in Listeria innocua serovar 6a (strain ATCC BAA-680 / CLIP 11262).